The chain runs to 423 residues: Tyrosine--tRNA ligase (423 aa).

Tyr35 lines the L-tyrosine pocket. The 'HIGH' region motif lies at 40 to 49 (PTAASLHVGH). Residues Tyr170 and Gln174 each coordinate L-tyrosine. The 'KMSKS' region signature appears at 231–235 (KFGKS). Lys234 contacts ATP. The S4 RNA-binding domain occupies 353-419 (GPLVDLLVEV…GKKNLAAVEV (67 aa)).

This sequence belongs to the class-I aminoacyl-tRNA synthetase family. TyrS type 1 subfamily. In terms of assembly, homodimer.

It is found in the cytoplasm. The enzyme catalyses tRNA(Tyr) + L-tyrosine + ATP = L-tyrosyl-tRNA(Tyr) + AMP + diphosphate + H(+). In terms of biological role, catalyzes the attachment of tyrosine to tRNA(Tyr) in a two-step reaction: tyrosine is first activated by ATP to form Tyr-AMP and then transferred to the acceptor end of tRNA(Tyr). The protein is Tyrosine--tRNA ligase of Streptomyces griseus subsp. griseus (strain JCM 4626 / CBS 651.72 / NBRC 13350 / KCC S-0626 / ISP 5235).